A 465-amino-acid chain; its full sequence is Probable citrate synthase, mitochondrial (465 aa).

Active-site residues include histidine 303, histidine 349, and aspartate 404.

It belongs to the citrate synthase family. As to quaternary structure, homodimer.

It is found in the mitochondrion matrix. The catalysed reaction is oxaloacetate + acetyl-CoA + H2O = citrate + CoA + H(+). The protein operates within carbohydrate metabolism; tricarboxylic acid cycle; isocitrate from oxaloacetate: step 1/2. The sequence is that of Probable citrate synthase, mitochondrial from Glossina morsitans morsitans (Savannah tsetse fly).